We begin with the raw amino-acid sequence, 451 residues long: Tubulin gamma-1 chain (451 aa).

A Phosphoserine; by BRSK1 modification is found at Ser-131. 142 to 148 (AGGTGSG) contacts GTP.

It belongs to the tubulin family. As to quaternary structure, component of the gamma-tubulin ring complex (gTuRC) consisting of TUBGCP2, TUBGCP3, TUBGCP4, TUBGCP5 and TUBGCP6 and gamma-tubulin TUBG1 or TUBG2. TUBGCP2, TUBGCP3, TUBGCP4, TUBGCP5 and TUBGCP6 assemble in a 5:5:2:1:1 stoichiometry; each is associated with a gamma-tubulin, thereby arranging 14 gamma-tubulins in a helical manner. Gamma-tubulin at the first position is blocked by TUBGCP3 at the last position, allowing 13 protafilaments to grow into a microtubule. The gTuRC (via TUBGCP3 and TUBGCP6) interacts with ACTB and MZT1; the interactions form a luminal bridge that stabilizes the initial structure during complex assembly. The gTuRC (via TUBGCP2) interacts with MZT2A/MZT2B and CDK5RAP2 (via CM1 motif); the interactions play a role in gTuRC activation. Interacts with alpha-beta tubulin heterodimers; the interaction allows microtubules to nucleate from the gTuRC. Interacts with B9D2. Interacts with CDK5RAP2; the interaction is leading to centrosomal localization of TUBG1 and CDK5RAP2. Interacts with CIMAP3. Interacts with SAS6 and NUP62 at the centrosome. Interacts with EML3 (phosphorylated at 'Thr-881') and HAUS8. Interacts with DNM2; this interaction may participate in centrosome cohesion. Interacts with CCDC66. In terms of processing, phosphorylation at Ser-131 by BRSK1 regulates centrosome duplication, possibly by mediating relocation of gamma-tubulin and its associated proteins from the cytoplasm to the centrosome.

Its subcellular location is the cytoplasm. The protein localises to the cytoskeleton. It localises to the microtubule organizing center. The protein resides in the centrosome. It is found in the spindle. Its function is as follows. Tubulin is the major constituent of microtubules, protein filaments consisting of alpha- and beta-tubulin heterodimers. Gamma-tubulin is a key component of the gamma-tubulin ring complex (gTuRC) which mediates microtubule nucleation. The gTuRC regulates the minus-end nucleation of alpha-beta tubulin heterodimers that grow into microtubule protafilaments, a critical step in centrosome duplication and spindle formation. This chain is Tubulin gamma-1 chain, found in Mus musculus (Mouse).